Consider the following 849-residue polypeptide: Membrane protein-large ribosomal subunit bL9 fusion protein (849 aa).

A unknown region spans residues 1 to 680; that stretch reads MFSKNKHNTK…TQLEGTNIKT (680 aa). A run of 2 helical transmembrane segments spans residues 11–31 and 64–84; these read FIVI…FDFQ and IIFF…IISF. Positions 214-342 constitute a GGDEF domain; it reads KTLAIAMIAF…GGDQVVVNIE (129 aa). Residues 681-849 form a large ribosomal subunit protein bL9 region; that stretch reads VTDTLKHFLK…FLNVTERKSK (169 aa).

Belongs to the bacterial ribosomal protein bL9 family.

The protein resides in the cell membrane. In terms of biological role, binds to the 23S rRNA. This chain is Membrane protein-large ribosomal subunit bL9 fusion protein, found in Aster yellows witches'-broom phytoplasma (strain AYWB).